A 307-amino-acid polypeptide reads, in one-letter code: tRNA-cytidine(32) 2-sulfurtransferase (307 aa).

Positions 44–49 match the PP-loop motif motif; it reads SGGKDS. 3 residues coordinate [4Fe-4S] cluster: Cys119, Cys122, and Cys210.

This sequence belongs to the TtcA family. As to quaternary structure, homodimer. The cofactor is Mg(2+). It depends on [4Fe-4S] cluster as a cofactor.

Its subcellular location is the cytoplasm. The enzyme catalyses cytidine(32) in tRNA + S-sulfanyl-L-cysteinyl-[cysteine desulfurase] + AH2 + ATP = 2-thiocytidine(32) in tRNA + L-cysteinyl-[cysteine desulfurase] + A + AMP + diphosphate + H(+). The protein operates within tRNA modification. Catalyzes the ATP-dependent 2-thiolation of cytidine in position 32 of tRNA, to form 2-thiocytidine (s(2)C32). The sulfur atoms are provided by the cysteine/cysteine desulfurase (IscS) system. In Aliivibrio salmonicida (strain LFI1238) (Vibrio salmonicida (strain LFI1238)), this protein is tRNA-cytidine(32) 2-sulfurtransferase.